Reading from the N-terminus, the 138-residue chain is PilB-specific inhibitory protein CpiA (138 aa).

Interacts with PilB but not with TfpB.

Functionally, acts as a PilB inhibitor to control natural transformation. Inhibits type IV pili (T4P) extension by specifically binding and inhibiting the pilus extension ATPase PilB but not TfpB. This activity probably modulates T4P extension under different environmental conditions. The sequence is that of PilB-specific inhibitory protein CpiA from Acinetobacter baylyi (strain ATCC 33305 / BD413 / ADP1).